The primary structure comprises 476 residues: Protein transport protein Sec61 subunit alpha isoform 2 (476 aa).

Residues 1–32 (MGIKFLEVIKPFCAVLPEIQKPERKIQFREKV) are Cytoplasmic-facing. The helical transmembrane segment at 33-53 (LWTAITLFIFLVCCQIPLFGI) threads the bilayer. Residues 54–75 (MSSDSADPFYWMRVILASNRGT) lie on the Lumenal side of the membrane. The chain crosses the membrane as a helical span at residues 76 to 96 (LMELGISPIVTSGLIMQLLAG). Topologically, residues 97 to 117 (AKIIEVGDTPKDRALFNGAQK) are cytoplasmic. The helical transmembrane segment at 118-138 (LFGMIITIGQAIVYVMTGMYG) threads the bilayer. Topologically, residues 139–144 (DPAEMG) are lumenal. The helical transmembrane segment at 145–165 (AGICLLIIIQLFVAGLIVLLL) threads the bilayer. The Cytoplasmic portion of the chain corresponds to 166 to 172 (DELLQKG). The helical transmembrane segment at 173 to 193 (YGLGSGISLFIATNICETIVW) threads the bilayer. Residues 194-240 (KASSPTTINTGRGTEFEGAVIALFHLLATRTDKVRALREAFYRQNLP) are Lumenal-facing. Residues 241 to 261 (NLMNLIATVFVFAVVIYFQGF) traverse the membrane as a helical segment. Residues 262-288 (RVDLPIKSARYRGQYSSYPIKLFYTSN) are Cytoplasmic-facing. The chain crosses the membrane as a helical span at residues 289-309 (IPIILQSALVSNLYVISQMLS). At 310 to 353 (VRFSGNFLVNLLGQWADVSGGGPARSYPVGGLCYYLSPPESMGA) the chain is on the lumenal side. The chain crosses the membrane as a helical span at residues 354–374 (ILEDPVHVVVYIIFMLGSCAF). The Cytoplasmic portion of the chain corresponds to 375 to 420 (FSKTWIEVSGSSAKDVAKQLKEQQMVMRGHRDTSMVHELNRYIPTA). The next 2 membrane-spanning stretches (helical) occupy residues 421 to 441 (AAFGGLCIGALSVLADFLGAI) and 442 to 462 (GSGTGILLAVTIIYQYFEIFV). At 463-476 (KEQAEVGGMGALFF) the chain is on the cytoplasmic side.

Belongs to the SecY/SEC61-alpha family. The SEC61 channel-forming translocon complex consists of channel-forming core components SEC61A1, SEC61B and SEC61G and different auxiliary components such as SEC62 and SEC63.

It is found in the endoplasmic reticulum membrane. In terms of biological role, component of SEC61 channel-forming translocon complex that mediates transport of signal peptide-containing precursor polypeptides across the endoplasmic reticulum (ER). Forms a ribosome receptor and a gated pore in the ER membrane, both functions required for cotranslational translocation of nascent polypeptides. The sequence is that of Protein transport protein Sec61 subunit alpha isoform 2 (SEC61A2) from Pongo abelii (Sumatran orangutan).